Reading from the N-terminus, the 69-residue chain is Putative membrane protein insertion efficiency factor (69 aa).

This sequence belongs to the UPF0161 family.

It localises to the cell inner membrane. In terms of biological role, could be involved in insertion of integral membrane proteins into the membrane. The chain is Putative membrane protein insertion efficiency factor from Geobacter metallireducens (strain ATCC 53774 / DSM 7210 / GS-15).